Consider the following 121-residue polypeptide: Small ribosomal subunit protein uS10 (121 aa).

S2 carries the N-acetylserine modification. Glycyl lysine isopeptide (Lys-Gly) (interchain with G-Cter in ubiquitin) cross-links involve residues K6, K8, K21, K32, and K101.

It belongs to the universal ribosomal protein uS10 family. Component of the small ribosomal subunit (SSU). Mature yeast ribosomes consist of a small (40S) and a large (60S) subunit. The 40S small subunit contains 1 molecule of ribosomal RNA (18S rRNA) and 33 different proteins (encoded by 57 genes). The large 60S subunit contains 3 rRNA molecules (25S, 5.8S and 5S rRNA) and 46 different proteins (encoded by 81 genes). Post-translationally, ubiquitinated at Lys-6 and Lys-8 by HEL2, to activate the ribosome quality control (RQC) pathway in response to stalled ribosomes. N-terminally acetylated by acetyltransferase NatA. Also partially acetylated by NatC.

It is found in the cytoplasm. Its function is as follows. Component of the ribosome, a large ribonucleoprotein complex responsible for the synthesis of proteins in the cell. The small ribosomal subunit (SSU) binds messenger RNAs (mRNAs) and translates the encoded message by selecting cognate aminoacyl-transfer RNA (tRNA) molecules. The large subunit (LSU) contains the ribosomal catalytic site termed the peptidyl transferase center (PTC), which catalyzes the formation of peptide bonds, thereby polymerizing the amino acids delivered by tRNAs into a polypeptide chain. The nascent polypeptides leave the ribosome through a tunnel in the LSU and interact with protein factors that function in enzymatic processing, targeting, and the membrane insertion of nascent chains at the exit of the ribosomal tunnel. The protein is Small ribosomal subunit protein uS10 of Saccharomyces cerevisiae (strain ATCC 204508 / S288c) (Baker's yeast).